Reading from the N-terminus, the 319-residue chain is Cell division protein PomZ (319 aa).

Residue 61–68 (KGGTGKTS) participates in ATP binding.

This sequence belongs to the ParA family. Interacts with FtsZ in pull-down experiments.

The protein resides in the cytoplasm. In terms of biological role, spatial regulator of cell division that is involved in identifying the incipient division site, recruiting FtsZ to the division site and stabilizing the Z-ring. Binds ATP and GTP. In Myxococcus xanthus (strain DK1622), this protein is Cell division protein PomZ.